The sequence spans 452 residues: MEHEVAVSGGDSSLEEITGSSKLKPSKNTAIKCLKCDKVYIFPSDKDDCLAHLYMEHRLVIADVEDIALLEDYLQYWEKEFHTHEFEQYCTTMFLDQLPDGKYAKNEKYYLLCDILPQDYELRRRLKEKRLSEALERHQFELTDRTFSKECLFCRAIIKGLRADYLDHLFDKHFLLVGKPEKLVYVDELLDHLEENLNRLMCLYCEKIFRDRPTLKEHMRKKGHKRINPNRREYDKYFLINYNRVPTAPTPRKQHLQKRRRETASVSTVADPETGSVDFDKHFARPDSDGEHDSDWSDWAADGEPSSIKCLFCHHLGDNFTALKKHMHEVHRLDFEKATSSLNFYQRVKVVNYLRRQMCLLRCVTCDLQFDEEELLVEHMAQESHHGIGDKESWDKPEFFFPYIENDGLLCVLDDSGGDDPDVDTVRIISEDSLAQINKDAERLSLENFKLL.

The C2H2-type 1 zinc-finger motif lies at 200-224 (LMCLYCEKIFRDRPTLKEHMRKKGH). Positions 248-271 (APTPRKQHLQKRRRETASVSTVAD) are disordered. Residues 252-261 (RKQHLQKRRR) show a composition bias toward basic residues. The segment at 361–385 (LRCVTCDLQFDEEELLVEHMAQESH) adopts a C2H2-type 2 zinc-finger fold.

The protein belongs to the ZNF277 family. Interacts with components of the origin recognition complex (ORC) complex, Orc2 and Orc3, components of the SAGA transcription coactivator-HAT complex, Gcn5 and e(y)2, components of the mRNP biogenesis THO complex, thoc5 and e(y)2, and a component of the TFIID complex, TBP. Also interacts with polybromo, a component of the chromatin remodeling SWI/SNF complex.

It localises to the nucleus. The protein resides in the cytoplasm. Functionally, DNA binding protein which is involved in the positive regulation of both basal and inducible transcription. Mainly localizes to active promoter sites and interacts with components of various transcription and replication regulatory complexes, such as the ORC, SAGA, THO, TFIID and SWI/SNF complexes. It may therefore regulate transcription by promoting the association of these complexes to their binding sites. This Drosophila melanogaster (Fruit fly) protein is Zinc finger protein 277.